An 800-amino-acid chain; its full sequence is Kolavenyl diphosphate synthase TPS5, chloroplastic (800 aa).

The N-terminal 75 residues, 1–75, are a transit peptide targeting the chloroplast; the sequence is MSLAYSQATS…VILTAEKSVD (75 aa). Lys244 contributes to the substrate binding site. Asp375 and Asp377 together coordinate Mg(2+). Residues 375 to 378 carry the DXDD motif motif; the sequence is DVDD. Substrate is bound at residue Lys461.

The protein belongs to the terpene synthase family. Mg(2+) serves as cofactor. In terms of tissue distribution, mostly expressed in trichomes of leaves and fruits.

The protein localises to the plastid. The protein resides in the chloroplast. The enzyme catalyses (2E,6E,10E)-geranylgeranyl diphosphate = (+)-kolavenyl diphosphate. The protein operates within secondary metabolite biosynthesis; terpenoid biosynthesis. Involved in the biosynthesis of labdane-type diterpenoid including cleroda-dienols, and peregrinol lactones and furan derivatives, dopaminergic diterpenoids that can bind to dopamine receptors in the human pituitary gland, have probably ability to lower prolactin levels, and are used to treat menstrual cycle disorders (e.g. premenstrual syndrome and mastodynia). Terpene synthase that produces kolavenyl diphosphate from geranylgeranyl diphosphate (GGPP). The chain is Kolavenyl diphosphate synthase TPS5, chloroplastic from Vitex agnus-castus (Chaste tree).